Here is a 1132-residue protein sequence, read N- to C-terminus: Myosin-binding protein C, fast-type (1132 aa).

Residues 1-59 are disordered; the sequence is MPEPSKAAPKKEAKKKEEKKEEKKEAPPPQEHKDEAPDDVHPPETPDPEGLFLSKPQNV. The segment covering 9–44 has biased composition (basic and acidic residues); the sequence is PKKEAKKKEEKKEEKKEAPPPQEHKDEAPDDVHPPE. Ig-like C2-type domains are found at residues 48 to 149, 249 to 338, 339 to 429, 430 to 530, and 531 to 630; these read PEGL…SIDV, SEAF…VKEP, PVTV…VEEK, QLEV…KQEP, and PKIH…VVDV. 2 Fibronectin type-III domains span residues 633–729 and 731–826; these read PPQS…IAPT and EPTH…IREI. One can recognise an Ig-like C2-type 6 domain in the interval 830–923; sequence PKIRLPRHLR…ATLRLRVVER (94 aa). The region spanning 926–1022 is the Fibronectin type-III 3 domain; it reads PPQAVRVMEV…HNTARIAKEG (97 aa). One can recognise an Ig-like C2-type 7 domain in the interval 1039-1132; it reads PQFLTPLVDR…ECRLDVRVPQ (94 aa).

This sequence belongs to the immunoglobulin superfamily. MyBP family.

In terms of biological role, thick filament-associated protein located in the crossbridge region of vertebrate striated muscle a bands. In vitro it binds MHC, F-actin and native thin filaments, and modifies the activity of actin-activated myosin ATPase. It may modulate muscle contraction or may play a more structural role. The sequence is that of Myosin-binding protein C, fast-type (MYBPC2) from Gallus gallus (Chicken).